The sequence spans 106 residues: Probable insulin-like peptide beta-type 1 (106 aa).

The N-terminal stretch at 1 to 19 (MFSFFTYFLLSALLLSASC) is a signal peptide. A propeptide spans 20-51 (RQPSMDTSKADRILREIEMETELENQLSRARR) (removed; by convertase egl-3). Intrachain disulfides connect C60–C89, C72–C102, C76–C103, and C88–C93.

The protein belongs to the insulin family. As to expression, expressed by ASI and ASJ sensory neurons and weakly by ventral cord motor neurons.

It is found in the secreted. Functionally, probable insulin-like peptide which negatively regulates synapse development at the neuromuscular junctions. Probably acts as a daf-2/InsR agonist ligand to prevent dauer formation under optimal environmental conditions. In Caenorhabditis elegans, this protein is Probable insulin-like peptide beta-type 1 (ins-4).